The following is a 310-amino-acid chain: Methionyl-tRNA formyltransferase (310 aa).

109 to 112 provides a ligand contact to (6S)-5,6,7,8-tetrahydrofolate; the sequence is SLLP.

It belongs to the Fmt family.

The enzyme catalyses L-methionyl-tRNA(fMet) + (6R)-10-formyltetrahydrofolate = N-formyl-L-methionyl-tRNA(fMet) + (6S)-5,6,7,8-tetrahydrofolate + H(+). Functionally, attaches a formyl group to the free amino group of methionyl-tRNA(fMet). The formyl group appears to play a dual role in the initiator identity of N-formylmethionyl-tRNA by promoting its recognition by IF2 and preventing the misappropriation of this tRNA by the elongation apparatus. This Macrococcus caseolyticus (strain JCSC5402) (Macrococcoides caseolyticum) protein is Methionyl-tRNA formyltransferase.